Here is a 442-residue protein sequence, read N- to C-terminus: MASKSIHKKHQENSQQDKNQFSVHHYLDPNQSIHALISCSEKKYEKNQNQKKNPLPSSYYHQKRNPGSSAHSPYGSVDESSRTAVSPAMDMVSNQAPIHTRQVSAPNLHTSVNNGQSSATVPHPSHHNVHHQHSKSVSALPMTIGYSPVPSHVKSVSHEANYSYAGLSEIPQQQGMMQQNREKSLSLDPMRRPFMTPQDVEQLPMPQGWEMCYDSDGVRYFKDHNSKTTTWDDPRLKQQEQTGFGLGENIGQNRYNNCYDNGHSSRSLPSIHQHQQMIPNHPQPQYSSQQQMDYIQQLQNERMMIQEKNAQLINSGLVDSPQPPYQAISPMSSTMMHSHDPNFMYQQQQQAQNSQQQQTPHTLHQIPNQYQNSQMNDDSAMEVDYSMVSHPQQLQHQHQPHMHNNMPSNYVIDDINPHEFDQYLQISNDNNRGVGSMVHHYQ.

The segment covering 1 to 10 (MASKSIHKKH) has biased composition (basic residues). The tract at residues 1–84 (MASKSIHKKH…GSVDESSRTA (84 aa)) is disordered. 2 stretches are compositionally biased toward polar residues: residues 13 to 22 (NSQQDKNQFS) and 55 to 71 (LPSS…SSAH). Serine 104 is modified (phosphoserine). Polar residues predominate over residues 108-120 (LHTSVNNGQSSAT). The disordered stretch occupies residues 108-136 (LHTSVNNGQSSATVPHPSHHNVHHQHSKS). Over residues 124–134 (PSHHNVHHQHS) the composition is skewed to basic residues. Positions 203–236 (LPMPQGWEMCYDSDGVRYFKDHNSKTTTWDDPRL) constitute a WW domain.

It belongs to the YAP1 family. Highly divergent. Interacts (via WW domain) with wts-1 (via N-terminus). Interacts (via WW domain) with egl-44; the interaction may regulate transcription. Expressed in epithelia, hypodermis, muscles, pharynx, intestine, gonadal sheath cells, vulva, spermatheca and in excretory tissue.

Its subcellular location is the cytoplasm. The protein resides in the nucleus. The protein localises to the cell projection. It localises to the cilium. It is found in the cytoskeleton. Its subcellular location is the cilium axoneme. Its function is as follows. Plays a role in thermal stress response and in aging. In Caenorhabditis elegans, this protein is Yes-associated protein homolog 1.